Consider the following 327-residue polypeptide: Fumigatonoid B endoperoxide isomerase nvfE (327 aa).

The disordered stretch occupies residues 1–22; the sequence is MGRDQVSHKRSQNSNVSEIPDL. The Fe cation site is built by histidine 152, aspartate 154, and histidine 234.

Belongs to the PhyH family. Homodimer. It depends on Fe cation as a cofactor.

The enzyme catalyses fumigatonoid B = fumigatonoid C. The protein operates within secondary metabolite biosynthesis; terpenoid biosynthesis. Fumigatonoid B endoperoxide isomerase; part of the gene cluster that mediates the biosynthesis of novofumigatonin, a heavily oxygenated meroterpenoid containing a unique orthoester moiety. The first step of the pathway is the synthesis of 3,5-dimethylorsellinic acid (DMOA) by the polyketide synthase nvfA via condensation of one acetyl-CoA starter unit with 3 malonyl-CoA units and 2 methylations. DMOA is then converted to farnesyl-DMOA by the farnesyltransferase nvfB. Epoxydation by FAD-dependent monooxygenase nvfK, followed by a protonation-initiated cyclization catalyzed by the terpene cyclase nvfL leads to the production of asnavolin H. The short chain dehydrogenase nvfC then as a 3-OH dehydrogenase of asnovolin H to yield chemesin D. There are two branches to synthesize asnovolin A from chemesin D. In one branch, chemesin D undergoes Baeyer-Villiger oxidation by nvfH, methylation by nvfJ, and enoyl reduction by the nvfM D enoylreductase that reduces the double bond between C-5'and C-6', to form respectively asnovolin I, asnovolin K, and asnovolin A. In the other branch, the methylation precedes the Baeyer-Villiger oxidation and the enoyl reduction to yield asnovolin A via the asnovolin J intermediate. Asnovolin A is further converted to fumigatonoid A by the Fe(II)/2-oxoglutarate-dependent dioxygenase nvfI that catalyzes an endoperoxidation reaction. The alpha/beta hydrolase nvfD then acts as an epimerase that converts fumigatonoid A to its C-5' epimer, which then undergoes spontaneous or nvfD-catalyzed lactonization. The following step utilizes the ketoreductase nvfG to produce fumigatonoid B. The dioxygenase nvfE further converts fumigatonoid B into fumigatonoid C. Finally the Fe(II)/2-oxoglutarate-dependent dioxygenase nvfF catalyzes two rounds of oxidation to transform fumigatonoid C into the end product, novofumigatonin A. The chain is Fumigatonoid B endoperoxide isomerase nvfE from Aspergillus novofumigatus (strain IBT 16806).